The sequence spans 133 residues: Ribosome-binding factor A (133 aa).

This sequence belongs to the RbfA family. As to quaternary structure, monomer. Binds 30S ribosomal subunits, but not 50S ribosomal subunits or 70S ribosomes.

It is found in the cytoplasm. Functionally, one of several proteins that assist in the late maturation steps of the functional core of the 30S ribosomal subunit. Associates with free 30S ribosomal subunits (but not with 30S subunits that are part of 70S ribosomes or polysomes). Required for efficient processing of 16S rRNA. May interact with the 5'-terminal helix region of 16S rRNA. This is Ribosome-binding factor A from Acinetobacter baumannii (strain AB307-0294).